A 258-amino-acid chain; its full sequence is Imidazole glycerol phosphate synthase subunit HisF (258 aa).

Active-site residues include D11 and D130.

It belongs to the HisA/HisF family. As to quaternary structure, heterodimer of HisH and HisF.

It is found in the cytoplasm. The enzyme catalyses 5-[(5-phospho-1-deoxy-D-ribulos-1-ylimino)methylamino]-1-(5-phospho-beta-D-ribosyl)imidazole-4-carboxamide + L-glutamine = D-erythro-1-(imidazol-4-yl)glycerol 3-phosphate + 5-amino-1-(5-phospho-beta-D-ribosyl)imidazole-4-carboxamide + L-glutamate + H(+). It participates in amino-acid biosynthesis; L-histidine biosynthesis; L-histidine from 5-phospho-alpha-D-ribose 1-diphosphate: step 5/9. In terms of biological role, IGPS catalyzes the conversion of PRFAR and glutamine to IGP, AICAR and glutamate. The HisF subunit catalyzes the cyclization activity that produces IGP and AICAR from PRFAR using the ammonia provided by the HisH subunit. The sequence is that of Imidazole glycerol phosphate synthase subunit HisF from Rhodospirillum centenum (strain ATCC 51521 / SW).